The sequence spans 76 residues: UPF0248 protein PAE2518 (76 aa).

Belongs to the UPF0248 family.

The chain is UPF0248 protein PAE2518 from Pyrobaculum aerophilum (strain ATCC 51768 / DSM 7523 / JCM 9630 / CIP 104966 / NBRC 100827 / IM2).